A 589-amino-acid polypeptide reads, in one-letter code: L-fucose isomerase (589 aa).

Active-site proton acceptor residues include Glu-340 and Asp-364. Mn(2+)-binding residues include Glu-340, Asp-364, and His-527.

Belongs to the L-fucose isomerase family. It depends on Mn(2+) as a cofactor.

It localises to the cytoplasm. The enzyme catalyses L-fucose = L-fuculose. The protein operates within carbohydrate degradation; L-fucose degradation; L-lactaldehyde and glycerone phosphate from L-fucose: step 1/3. Converts the aldose L-fucose into the corresponding ketose L-fuculose. This Haemophilus influenzae (strain ATCC 51907 / DSM 11121 / KW20 / Rd) protein is L-fucose isomerase.